The primary structure comprises 94 residues: Phosphoribosyl-ATP pyrophosphatase (94 aa).

Belongs to the PRA-PH family.

The protein resides in the cytoplasm. It catalyses the reaction 1-(5-phospho-beta-D-ribosyl)-ATP + H2O = 1-(5-phospho-beta-D-ribosyl)-5'-AMP + diphosphate + H(+). The protein operates within amino-acid biosynthesis; L-histidine biosynthesis; L-histidine from 5-phospho-alpha-D-ribose 1-diphosphate: step 2/9. This Sulfurisphaera tokodaii (strain DSM 16993 / JCM 10545 / NBRC 100140 / 7) (Sulfolobus tokodaii) protein is Phosphoribosyl-ATP pyrophosphatase (hisE).